The chain runs to 416 residues: Tyrosine--tRNA ligase (416 aa).

Residue tyrosine 40 coordinates L-tyrosine. The 'HIGH' region signature appears at 45 to 54 (ATAASLHVGH). Residues tyrosine 177 and glutamine 181 each coordinate L-tyrosine. Positions 237 to 241 (KMGKS) match the 'KMSKS' region motif. Residue lysine 240 participates in ATP binding. The 66-residue stretch at 351-416 (LSVTHFLVAA…RKKHKLVRLA (66 aa)) folds into the S4 RNA-binding domain.

Belongs to the class-I aminoacyl-tRNA synthetase family. TyrS type 1 subfamily. Homodimer.

The protein localises to the cytoplasm. The catalysed reaction is tRNA(Tyr) + L-tyrosine + ATP = L-tyrosyl-tRNA(Tyr) + AMP + diphosphate + H(+). Its function is as follows. Catalyzes the attachment of tyrosine to tRNA(Tyr) in a two-step reaction: tyrosine is first activated by ATP to form Tyr-AMP and then transferred to the acceptor end of tRNA(Tyr). In Cereibacter sphaeroides (strain ATCC 17025 / ATH 2.4.3) (Rhodobacter sphaeroides), this protein is Tyrosine--tRNA ligase.